The sequence spans 94 residues: MNPHQIIKRPLITEKNTNLMRFNKYSFEVDRNATKPQIKRAIEEIFNVRVTAVHTMNVRGKLRRRGRQYGYTADWKKAIVTLAEGDRIDLFEGA.

It belongs to the universal ribosomal protein uL23 family. In terms of assembly, part of the 50S ribosomal subunit. Contacts protein L29, and trigger factor when it is bound to the ribosome.

Functionally, one of the early assembly proteins it binds 23S rRNA. One of the proteins that surrounds the polypeptide exit tunnel on the outside of the ribosome. Forms the main docking site for trigger factor binding to the ribosome. The polypeptide is Large ribosomal subunit protein uL23 (Roseiflexus sp. (strain RS-1)).